Here is a 303-residue protein sequence, read N- to C-terminus: Methionyl-tRNA formyltransferase (303 aa).

110–113 (SLLP) contributes to the (6S)-5,6,7,8-tetrahydrofolate binding site.

Belongs to the Fmt family.

It carries out the reaction L-methionyl-tRNA(fMet) + (6R)-10-formyltetrahydrofolate = N-formyl-L-methionyl-tRNA(fMet) + (6S)-5,6,7,8-tetrahydrofolate + H(+). In terms of biological role, attaches a formyl group to the free amino group of methionyl-tRNA(fMet). The formyl group appears to play a dual role in the initiator identity of N-formylmethionyl-tRNA by promoting its recognition by IF2 and preventing the misappropriation of this tRNA by the elongation apparatus. The sequence is that of Methionyl-tRNA formyltransferase from Ehrlichia ruminantium (strain Welgevonden).